A 110-amino-acid polypeptide reads, in one-letter code: Phosphoribosyl-AMP cyclohydrolase (110 aa).

Residue aspartate 74 coordinates Mg(2+). Cysteine 75 is a binding site for Zn(2+). Aspartate 76 and aspartate 78 together coordinate Mg(2+). The Zn(2+) site is built by cysteine 91 and cysteine 98.

This sequence belongs to the PRA-CH family. As to quaternary structure, homodimer. Requires Mg(2+) as cofactor. Zn(2+) serves as cofactor.

It is found in the cytoplasm. The enzyme catalyses 1-(5-phospho-beta-D-ribosyl)-5'-AMP + H2O = 1-(5-phospho-beta-D-ribosyl)-5-[(5-phospho-beta-D-ribosylamino)methylideneamino]imidazole-4-carboxamide. It functions in the pathway amino-acid biosynthesis; L-histidine biosynthesis; L-histidine from 5-phospho-alpha-D-ribose 1-diphosphate: step 3/9. Functionally, catalyzes the hydrolysis of the adenine ring of phosphoribosyl-AMP. The polypeptide is Phosphoribosyl-AMP cyclohydrolase (Lacticaseibacillus paracasei (strain ATCC 334 / BCRC 17002 / CCUG 31169 / CIP 107868 / KCTC 3260 / NRRL B-441) (Lactobacillus paracasei)).